A 307-amino-acid chain; its full sequence is MTPPSGVGHTTRPLRATWRDYLALTKPKVISLLLWTTLTAMFMAARGWPGLGLLVVVSLAGYMSAGSAGVFNMIIDRDIDLRMKRTATRPTSSGLISTRDAAIFGGALQVLSFGMLWVWATPLAAWMSLAGFLTYVVVYTLWLKRNTWHNIVLGGAAGCFPPLVGWAAVTGDLNLFAWFLFAIIFFWTPVHFWALALMIKDEYREVGIPMLPVVHGDRLTVAQIGLYAIYTVVLSVMPVFLGEVGWLYFLSALVLGWLLLQRSWVLYRHVMAGNKVERKVAVPLYLYSMLYLALLFVAGAVDRVLLG.

Helical transmembrane passes span 29–49 (VISLLLWTTLTAMFMAARGWP), 51–71 (LGLLVVVSLAGYMSAGSAGVF), 101–120 (AAIFGGALQVLSFGMLWVWA), 124–143 (AAWMSLAGFLTYVVVYTLWL), 151–171 (IVLGGAAGCFPPLVGWAAVTG), 179–199 (FLFAIIFFWTPVHFWALALMI), 218–238 (RLTVAQIGLYAIYTVVLSVMP), 239–259 (VFLGEVGWLYFLSALVLGWLL), and 280–300 (VAVPLYLYSMLYLALLFVAGA).

Belongs to the UbiA prenyltransferase family. Protoheme IX farnesyltransferase subfamily.

It is found in the cell membrane. It carries out the reaction heme b + (2E,6E)-farnesyl diphosphate + H2O = Fe(II)-heme o + diphosphate. The protein operates within porphyrin-containing compound metabolism; heme O biosynthesis; heme O from protoheme: step 1/1. Its function is as follows. Converts heme B (protoheme IX) to heme O by substitution of the vinyl group on carbon 2 of heme B porphyrin ring with a hydroxyethyl farnesyl side group. The protein is Protoheme IX farnesyltransferase of Deinococcus geothermalis (strain DSM 11300 / CIP 105573 / AG-3a).